Reading from the N-terminus, the 154-residue chain is Transcriptional repressor NrdR (154 aa).

A zinc finger spans residues 3 to 34; the sequence is CPFCGANDTKVIDSRLVAEGEQVRRRRECVAC. One can recognise an ATP-cone domain in the interval 49 to 139; sequence PRLIKQDGTR…VYRRFQDLDE (91 aa).

This sequence belongs to the NrdR family. The cofactor is Zn(2+).

Functionally, negatively regulates transcription of bacterial ribonucleotide reductase nrd genes and operons by binding to NrdR-boxes. The chain is Transcriptional repressor NrdR from Pseudomonas entomophila (strain L48).